We begin with the raw amino-acid sequence, 371 residues long: Putative RING finger protein ORF117 (371 aa).

The segment at 72 to 108 (CCICFRKDVIYKEVPCGHYICVECYKEPIRNVCPECN) adopts an RING-type zinc-finger fold. Over residues 178 to 192 (EEEMNESEAEEEEPV) the composition is skewed to acidic residues. Residues 178-218 (EEEMNESEAEEEEPVPEIAQFEALNTPPPPPTNRRPKIRRP) are disordered.

The protein is Putative RING finger protein ORF117 of Magallana gigas (Pacific oyster).